We begin with the raw amino-acid sequence, 327 residues long: Diacylglycerol acyltransferase/mycolyltransferase Ag85B (327 aa).

The signal sequence occupies residues 1–38 (MIDVSGKIRAWGRWLLVGAAATLPSLISLAGGAATASA). Position 80 to 81 (80 to 81 (LR)) interacts with substrate. The segment at 96 to 106 (FEWYYQSGLSV) is fibronectin-binding. Residues Cys125 and Cys130 are joined by a disulfide bond. Residues Ser164 and Asp192 each coordinate substrate. Ser164 functions as the Nucleophile in the catalytic mechanism. Glu268 is an active-site residue. Substrate-binding positions include 270–273 (FVHG), Lys277, and 300–302 (HSW). His300 is an active-site residue.

Belongs to the mycobacterial A85 antigen family.

It localises to the secreted. The catalysed reaction is 2 alpha,alpha'-trehalose 6-mycolate = alpha,alpha'-trehalose 6,6'-bismycolate + alpha,alpha-trehalose. The enzyme catalyses an acyl-CoA + a 1,2-diacyl-sn-glycerol = a triacyl-sn-glycerol + CoA. The antigen 85 proteins (FbpA, FbpB, FbpC) are responsible for the high affinity of mycobacteria for fibronectin, a large adhesive glycoprotein, which facilitates the attachment of M.tuberculosis to murine alveolar macrophages (AMs). They also help to maintain the integrity of the cell wall by catalyzing the transfer of mycolic acids to cell wall arabinogalactan and through the synthesis of alpha,alpha-trehalose dimycolate (TDM, cord factor). They catalyze the transfer of a mycoloyl residue from one molecule of alpha,alpha-trehalose monomycolate (TMM) to another TMM, leading to the formation of TDM. In Mycobacterium leprae (strain TN), this protein is Diacylglycerol acyltransferase/mycolyltransferase Ag85B (fbpB).